Here is a 608-residue protein sequence, read N- to C-terminus: Glutamine--fructose-6-phosphate aminotransferase [isomerizing] (608 aa).

The active-site Nucleophile; for GATase activity is the Cys-2. A Glutamine amidotransferase type-2 domain is found at 2 to 217 (CGIVGYSGKK…DKEFVVLTSE (216 aa)). SIS domains lie at 285–424 (TKEQ…NKNT) and 453–598 (KVQK…VDKP). The active-site For Fru-6P isomerization activity is Lys-603.

Homodimer.

Its subcellular location is the cytoplasm. The enzyme catalyses D-fructose 6-phosphate + L-glutamine = D-glucosamine 6-phosphate + L-glutamate. Its function is as follows. Catalyzes the first step in hexosamine metabolism, converting fructose-6P into glucosamine-6P using glutamine as a nitrogen source. This Clostridium acetobutylicum (strain ATCC 824 / DSM 792 / JCM 1419 / IAM 19013 / LMG 5710 / NBRC 13948 / NRRL B-527 / VKM B-1787 / 2291 / W) protein is Glutamine--fructose-6-phosphate aminotransferase [isomerizing].